The sequence spans 76 residues: Small proline-rich protein 2E (76 aa).

3 repeat units span residues 21-29 (KKCPEPCPH), 30-38 (PQCPEPCPP), and 39-47 (PKCPEPCPE). The tract at residues 21–47 (KKCPEPCPHPQCPEPCPPPKCPEPCPE) is 3 X 9 AA approximate tandem repeats. The interval 52-76 (PSYQQKCPPVQPPPPCQQKCPPKSK) is disordered.

The protein belongs to the cornifin (SPRR) family. In terms of tissue distribution, expressed in uterus.

The protein resides in the cytoplasm. Functionally, cross-linked envelope protein of keratinocytes. It is a keratinocyte protein that first appears in the cell cytosol, but ultimately becomes cross-linked to membrane proteins by transglutaminase. All that results in the formation of an insoluble envelope beneath the plasma membrane. The sequence is that of Small proline-rich protein 2E (Sprr2e) from Mus musculus (Mouse).